Reading from the N-terminus, the 117-residue chain is Small ribosomal subunit protein uS8c (117 aa).

The protein belongs to the universal ribosomal protein uS8 family. Part of the 30S ribosomal subunit.

It is found in the plastid. The protein resides in the chloroplast. Functionally, one of the primary rRNA binding proteins, it binds directly to 16S rRNA central domain where it helps coordinate assembly of the platform of the 30S subunit. This is Small ribosomal subunit protein uS8c (rps8) from Cyanidioschyzon merolae (strain NIES-3377 / 10D) (Unicellular red alga).